The sequence spans 208 residues: FMN-dependent NADH:quinone oxidoreductase (208 aa).

FMN contacts are provided by residues 17 to 19 (SNS), 99 to 102 (MWNL), and 143 to 146 (SRGG).

The protein belongs to the azoreductase type 1 family. As to quaternary structure, homodimer. Requires FMN as cofactor.

It catalyses the reaction 2 a quinone + NADH + H(+) = 2 a 1,4-benzosemiquinone + NAD(+). It carries out the reaction N,N-dimethyl-1,4-phenylenediamine + anthranilate + 2 NAD(+) = 2-(4-dimethylaminophenyl)diazenylbenzoate + 2 NADH + 2 H(+). In terms of biological role, quinone reductase that provides resistance to thiol-specific stress caused by electrophilic quinones. Also exhibits azoreductase activity. Catalyzes the reductive cleavage of the azo bond in aromatic azo compounds to the corresponding amines. This Staphylococcus aureus (strain Mu50 / ATCC 700699) protein is FMN-dependent NADH:quinone oxidoreductase.